The primary structure comprises 191 residues: Iron-sulfur flavoprotein (191 aa).

Residues Cys47, Cys50, Cys53, and Cys59 each contribute to the [4Fe-4S] cluster site.

The protein belongs to the SsuE family. Isf subfamily. Homodimer. It depends on FMN as a cofactor. [4Fe-4S] cluster serves as cofactor.

Redox-active protein probably involved in electron transport during fermentation of acetate to methane. This chain is Iron-sulfur flavoprotein (isf), found in Methanosarcina thermophila.